The chain runs to 550 residues: Leiomodin-2 (550 aa).

An interaction with tropomyosin alpha region spans residues 1–47 (MSTFGYRRGLSKYESIDEDELLASLSPEELKELERELEDIEPDRNLP). Interaction with actin stretches follow at residues 1–165 (MSTF…TDNS), 166–500 (KPKT…KEIK), and 524–543 (VHEN…LRRV). Phosphoserine is present on residues Ser11, Ser15, and Ser24. A compositionally biased stretch (basic and acidic residues) spans 84–94 (ERLGECGKVAE). Disordered regions lie at residues 84 to 202 (ERLG…PCGN) and 359 to 527 (MDKQ…VHEN). A coiled-coil region spans residues 91–147 (KVAEEDKEESEEELIFTESNSEVSEEVCTEDEEESQEEEEDSEEEEDSEEEEETTEA). Acidic residues-rich tracts occupy residues 95–105 (EDKEESEEELI) and 113–145 (VSEE…EETT). 2 stretches are compositionally biased toward polar residues: residues 151–164 (INGT…NTDN) and 170–193 (FKSQ…NSES). Basic and acidic residues predominate over residues 359 to 377 (MDKQRQKRMQEQKQQEGHD). Polar residues predominate over residues 391–402 (TPGSSPYASPRQ). A Phosphoserine modification is found at Ser407. Pro residues predominate over residues 421 to 452 (PPSPVAPPPPPPPPPLPPHMLPPPPPPPAPPL). A compositionally biased stretch (polar residues) spans 468 to 479 (QQESAQRALQNG). The segment covering 480 to 490 (QRKKKGKKVKK) has biased composition (basic residues). Over residues 497–515 (KEIKNSLRSVQEKKMEDSS) the composition is skewed to basic and acidic residues. The WH2 domain occupies 524–543 (VHENLMEAIRGSSIRQLRRV).

The protein belongs to the tropomodulin family. In terms of assembly, can bind at least three actin monomers and thereby provides a nucleus for actin filament formation. Interacts (via N-terminus) with tropomyosin alpha (TPM1) (via N-terminus). May also interact with TPM2 (via N-terminus). Interacts with FLII. Detected in neonate heart (at protein level). Detected in embryonic heart and in pharyngeal arches. Detected in adult heart.

The protein resides in the cytoplasm. It localises to the myofibril. Its subcellular location is the sarcomere. It is found in the m line. The protein localises to the cytoskeleton. Functionally, mediates nucleation of actin filaments and thereby promotes actin polymerization. Plays a role in the regulation of actin filament length. Required for normal sarcomere organization in the heart, and for normal heart function. The chain is Leiomodin-2 (Lmod2) from Mus musculus (Mouse).